The primary structure comprises 511 residues: Frizzled/smoothened-like sans CRD protein C (511 aa).

The first 25 residues, 1–25 (MNQINKFIKNLYLIIITIILIIVIS), serve as a signal peptide directing secretion. At 26–93 (NDNNGLFING…QWESYFEMSL (68 aa)) the chain is on the extracellular side. N-linked (GlcNAc...) asparagine glycosylation occurs at N51. A helical membrane pass occupies residues 94 to 114 (IMGSISMFASLFLIITYSPLI). The Cytoplasmic segment spans residues 115 to 122 (NKKHTRHT). The chain crosses the membrane as a helical span at residues 123–143 (VGILCMSIGIFFVMVSDGRQL). Residues 144–172 (WDIESPGEYKKYCPDTGRYARQSDTKCLT) are Extracellular-facing. Residues 173–193 (TGLFFQFGCVTAIGWWSILAV) form a helical membrane-spanning segment. Topologically, residues 194–209 (DLWMTIAKKVQTTKKQ) are cytoplasmic. A helical transmembrane segment spans residues 210–230 (LLYYLIGINTVSLILTFGPVV). Over 231–253 (KNQYGFGNAAIGCWMLDLKYQYG) the chain is Extracellular. The chain crosses the membrane as a helical span at residues 254-274 (FFWIPVGICLSVGSVFIGLIF). The Cytoplasmic segment spans residues 275-295 (WEIYKISDAVKKRYLKKHIKP). The helical transmembrane segment at 296–316 (LCLIVLMCLEFLYMFIYYSYI) threads the bilayer. Over 317–357 (TANQPTYNKHVAEYIMCLIINAANVPGSYTCQLKTVSPTAQ) the chain is Extracellular. The helical transmembrane segment at 358-378 (FLFLIAIRLMGLQGLIFYGLT) threads the bilayer. The Cytoplasmic portion of the chain corresponds to 379-511 (AATKKVWANS…RVNSPDNLQP (133 aa)). Residues 430–511 (NGYTTGGSDN…RVNSPDNLQP (82 aa)) are disordered. Positions 433-443 (TTGGSDNGVGS) are enriched in gly residues. A compositionally biased stretch (polar residues) spans 451–460 (KSSSNGGAQD). The segment covering 461-485 (NNNNNNNNNNNNNNNNNNNNNNNNN) has biased composition (low complexity). The span at 486–511 (SSSLEISGVESNNSTPRVNSPDNLQP) shows a compositional bias: polar residues.

It belongs to the G-protein coupled receptor Fz/Smo family.

The protein resides in the membrane. The chain is Frizzled/smoothened-like sans CRD protein C (fscC) from Dictyostelium discoideum (Social amoeba).